Reading from the N-terminus, the 342-residue chain is Ferredoxin--NADP reductase (342 aa).

FAD is bound by residues Cys-17, Asp-36, Gln-44, Tyr-49, Val-89, Phe-124, Asp-289, and Thr-330.

Belongs to the ferredoxin--NADP reductase type 2 family. Homodimer. Requires FAD as cofactor.

The enzyme catalyses 2 reduced [2Fe-2S]-[ferredoxin] + NADP(+) + H(+) = 2 oxidized [2Fe-2S]-[ferredoxin] + NADPH. The protein is Ferredoxin--NADP reductase of Bradyrhizobium diazoefficiens (strain JCM 10833 / BCRC 13528 / IAM 13628 / NBRC 14792 / USDA 110).